Reading from the N-terminus, the 531-residue chain is Zinc finger CCCH-type with G patch domain-containing protein (531 aa).

At M1 the chain carries N-acetylmethionine. The disordered stretch occupies residues 91–133 (EAPAAARGSGSETVPKAEAGPESAAGGQEEEEGEDEEELSGTK). A compositionally biased stretch (low complexity) spans 107–117 (AEAGPESAAGG). Positions 118-129 (QEEEEGEDEEEL) are enriched in acidic residues. A C3H1-type zinc finger spans residues 175-201 (KSLKPCPFFLEGKCRFKENCRFSHGQV). Positions 267 to 289 (PPLRTEATESDSDSDGTGDSSYA) are disordered. Residues 333–379 (TRGIGSRLLTKMGYEFGKGLGRHAEGRVEPIHAVVLPRGKSLDQCVE) form the G-patch domain. S373 carries the post-translational modification Phosphoserine. 3 disordered regions span residues 385–409 (TRVGKAGTNKPPRCRGRGARPGGRP), 426–446 (APGALEAGAAPAGRRSKDMYH), and 509–531 (RAQEAGLQQEQRKADTHKKMTEF). A compositionally biased stretch (low complexity) spans 426–438 (APGALEAGAAPAG). Over residues 518-531 (EQRKADTHKKMTEF) the composition is skewed to basic and acidic residues.

Interacts with CHD4/Mi-2; the interaction is direct. In terms of processing, ubiquitinated in case of infection by HIV-1, leading to its degradation. Ubiquitination is mediated by the CUL4A-RBX1-DDB1-DCAF1/VPRBP complex that is hijacked by HIV-1 via interaction between HIV-1 Vpr and DCAF1/VPRBP. In terms of tissue distribution, widely expressed.

The protein resides in the nucleus. Functionally, transcription repressor that specifically binds the 5'-GGAG[GA]A[GA]A-3' consensus sequence. Represses transcription by recruiting the chromatin multiprotein complex NuRD to target promoters. Negatively regulates expression of EGFR, a gene involved in cell proliferation, survival and migration. Its ability to repress genes of the EGFR pathway suggest it may act as a tumor suppressor. Able to suppress breast carcinogenesis. In terms of biological role, antagonizes the transcription repression by isoform 1 by competing for the binding of the NuRD complex. Does not bind DNA. The chain is Zinc finger CCCH-type with G patch domain-containing protein (ZGPAT) from Homo sapiens (Human).